Reading from the N-terminus, the 201-residue chain is Retinol-binding protein 4 (201 aa).

Residues 1–18 (MEWVWALVLLAALGSGRG) form the signal peptide. 3 disulfides stabilise this stretch: cysteine 22-cysteine 178, cysteine 88-cysteine 192, and cysteine 138-cysteine 147. Glutamine 116 contacts substrate. Arginine 139 is modified (omega-N-methylarginine).

The protein belongs to the calycin superfamily. Lipocalin family. As to quaternary structure, interacts with TTR. Interaction with TTR prevents its loss by filtration through the kidney glomeruli. Interacts with STRA6.

The protein localises to the secreted. Functionally, retinol-binding protein that mediates retinol transport in blood plasma. Delivers retinol from the liver stores to the peripheral tissues. Transfers the bound all-trans retinol to STRA6, that then facilitates retinol transport across the cell membrane. The protein is Retinol-binding protein 4 (RBP4) of Oryctolagus cuniculus (Rabbit).